The primary structure comprises 278 residues: HTH-type transcriptional activator RhaS (278 aa).

In terms of domain architecture, HTH araC/xylS-type spans 174 to 272; that stretch reads NQLMAWLEDH…NWSPRDIRQG (99 aa). 2 consecutive DNA-binding regions (H-T-H motif) follow at residues 191–212 and 239–262; these read EAVAEQFSLSLRTLHRQLKQHT and VTEIAYRCGFGDSNHFSTLFRREF.

Binds DNA as a dimer.

The protein resides in the cytoplasm. Activates expression of the rhaBAD and rhaT operons. The protein is HTH-type transcriptional activator RhaS of Salmonella heidelberg (strain SL476).